The chain runs to 801 residues: uncharacterized protein (801 aa).

The PE domain maps to 1–93 (MSWVMVSPEL…GGAYAAAEAA (93 aa)).

Belongs to the mycobacterial PE family. PGRS subfamily.

This is an uncharacterized protein from Mycobacterium tuberculosis (strain ATCC 25618 / H37Rv).